Consider the following 378-residue polypeptide: Spermidine/putrescine import ATP-binding protein PotA (378 aa).

The region spanning V18–I248 is the ABC transporter domain. Residue G50–T57 participates in ATP binding.

The protein belongs to the ABC transporter superfamily. Spermidine/putrescine importer (TC 3.A.1.11.1) family. In terms of assembly, the complex is composed of two ATP-binding proteins (PotA), two transmembrane proteins (PotB and PotC) and a solute-binding protein (PotD).

The protein resides in the cell inner membrane. It catalyses the reaction ATP + H2O + polyamine-[polyamine-binding protein]Side 1 = ADP + phosphate + polyamineSide 2 + [polyamine-binding protein]Side 1.. Functionally, part of the ABC transporter complex PotABCD involved in spermidine/putrescine import. Responsible for energy coupling to the transport system. This Salmonella choleraesuis (strain SC-B67) protein is Spermidine/putrescine import ATP-binding protein PotA.